A 53-amino-acid polypeptide reads, in one-letter code: Snake venom serine protease LmrSP-4 (53 aa).

C26 and C42 are disulfide-bonded. Residue H41 is the Charge relay system of the active site.

In terms of assembly, monomer. N-glycosylated. Expressed by the venom gland.

It localises to the secreted. Inhibited by the small molecule serine protease inhibitors phenylmethylsulfonyl fluoride (PMSF) and benzamidine. Snake venom serine protease that has fibrinogenolytic activity. Hydrolyzes the alpha-chain of fibrinogen (FGA), without affecting the beta- and the gamma-chains. Also displays hydrolytic activity towards S-2302 (plasma kallikrein substrate) and S-2251 (substrate for plasmin), but has no hydrolytic activity with S-2238 (thrombin substrate) or S-2222 (factor Xa). The protein is Snake venom serine protease LmrSP-4 of Lachesis muta rhombeata (Bushmaster).